Reading from the N-terminus, the 857-residue chain is Envelope glycoprotein B (857 aa).

The signal sequence occupies residues 1–21 (MTRRRVLSVVVLLAALACRLG). Topologically, residues 22-732 (AQTPEQPAPP…SGFISFFKNP (711 aa)) are virion surface. Intrachain disulfides connect Cys-51–Cys-528, Cys-68–Cys-484, Cys-141–Cys-206, Cys-295–Cys-342, and Cys-551–Cys-588. N-linked (GlcNAc...) asparagine; by host glycosylation is present at Asn-76. The interval 108–114 (IYNGWYA) is involved in fusion and/or binding to host membrane. The N-linked (GlcNAc...) asparagine; by host glycan is linked to Asn-163. An involved in fusion and/or binding to host membrane region spans residues 192-200 (GWLIWTYRT). N-linked (GlcNAc...) asparagine; by host glycosylation is found at Asn-290, Asn-329, Asn-348, and Asn-395. The interval 398–452 (ELTTPTSSPPSSPSPPAPPAARGSTSAAVLRRRRRDAGNATTPVPPAAPGKSLGT) is disordered. The segment covering 404–416 (SSPPSSPSPPAPP) has biased composition (pro residues). Residues Asn-436, Asn-563, and Asn-629 are each glycosylated (N-linked (GlcNAc...) asparagine; by host). Hydrophobic membrane proximal region stretches follow at residues 678–730 (LDNA…SFFK) and 709–729 (NLVSTVGGLFSSLVSGFISFF). Residues 733-753 (FGGMLILVLVAGVVILVISLT) traverse the membrane as a helical segment. Residues 754–857 (RRTRQMSQQP…ALLGEAETEF (104 aa)) are Intravirion-facing. The tract at residues 832–857 (FPGLRRRRYHDPETAAALLGEAETEF) is disordered. Positions 845 to 857 (TAAALLGEAETEF) are enriched in low complexity.

This sequence belongs to the herpesviridae glycoprotein B family. In terms of assembly, homotrimer; disulfide-linked. Binds to heparan sulfate proteoglycans. Interacts with gH/gL heterodimer. Post-translationally, a proteolytic cleavage by host furin generates two subunits that remain linked by disulfide bonds.

The protein resides in the virion membrane. It localises to the host cell membrane. The protein localises to the host endosome membrane. It is found in the host Golgi apparatus membrane. Functionally, envelope glycoprotein that forms spikes at the surface of virion envelope. Essential for the initial attachment to heparan sulfate moieties of the host cell surface proteoglycans. Involved in fusion of viral and cellular membranes leading to virus entry into the host cell. Following initial binding to its host receptors, membrane fusion is mediated by the fusion machinery composed at least of gB and the heterodimer gH/gL. May be involved in the fusion between the virion envelope and the outer nuclear membrane during virion egress. The protein is Envelope glycoprotein B of Epstein-Barr virus (strain GD1) (HHV-4).